The following is an 819-amino-acid chain: Leucine--tRNA ligase (819 aa).

Positions 42–53 (PYPSGAKLHIGH) match the 'HIGH' region motif. The 'KMSKS' region signature appears at 578–582 (RMSKS). An ATP-binding site is contributed by Lys581.

This sequence belongs to the class-I aminoacyl-tRNA synthetase family.

Its subcellular location is the cytoplasm. It catalyses the reaction tRNA(Leu) + L-leucine + ATP = L-leucyl-tRNA(Leu) + AMP + diphosphate. This chain is Leucine--tRNA ligase, found in Caldanaerobacter subterraneus subsp. tengcongensis (strain DSM 15242 / JCM 11007 / NBRC 100824 / MB4) (Thermoanaerobacter tengcongensis).